The sequence spans 258 residues: Probable splicing factor, arginine/serine-rich 3 (258 aa).

In terms of domain architecture, RRM 1 spans 9 to 83; sequence QKVYVGNLPG…RRIRVEFTRG (75 aa). Disordered stretches follow at residues 81 to 120 and 190 to 258; these read TRGV…PQRR and AYIR…PSPQ. A compositionally biased stretch (basic and acidic residues) spans 97–107; that stretch reads GGDHRGGDFRG. A compositionally biased stretch (gly residues) spans 108–117; sequence GRGGGRGGGP. The RRM 2 domain maps to 123 to 197; sequence YRVIVEGLPP…ETAYIRVRED (75 aa). A compositionally biased stretch (basic and acidic residues) spans 208–223; the sequence is GRDRSRSRSPRAERRA. The segment covering 228-246 has biased composition (basic residues); it reads SPRRSRSRSRSRSRSRSRS. Low complexity predominate over residues 247–258; sequence ASRSPSRSPSPQ.

Belongs to the splicing factor SR family. Interacts with spk-1. Directly phosphorylated by spk-1 in vitro on serine residues of the RS domain. In terms of tissue distribution, predominantly coexpressed with spk-1 in adult hermaphrodite germlines.

It is found in the nucleus. In terms of biological role, plays an essential role in embryogenesis. The protein is Probable splicing factor, arginine/serine-rich 3 (rsp-3) of Caenorhabditis elegans.